Reading from the N-terminus, the 198-residue chain is 5'-deoxynucleotidase hdd1 (198 aa).

Positions 38–144 (IADHMYRMGI…VKDIDKFEMI (107 aa)) constitute an HD domain. The a divalent metal cation site is built by histidine 41, histidine 69, aspartate 70, glutamate 73, aspartate 78, isoleucine 79, and aspartate 139.

It belongs to the HDDC2 family. As to quaternary structure, homodimer. The cofactor is Mn(2+). Co(2+) serves as cofactor. It depends on Mg(2+) as a cofactor.

Its subcellular location is the cytoplasm. It localises to the nucleus. The catalysed reaction is a 2'-deoxyribonucleoside 5'-phosphate + H2O = a 2'-deoxyribonucleoside + phosphate. Functionally, catalyzes the dephosphorylation of the nucleoside 5'-monophosphates deoxyadenosine monophosphate (dAMP), deoxycytidine monophosphate (dCMP), deoxyguanosine monophosphate (dGMP) and deoxythymidine monophosphate (dTMP). This Schizosaccharomyces pombe (strain 972 / ATCC 24843) (Fission yeast) protein is 5'-deoxynucleotidase hdd1.